A 660-amino-acid chain; its full sequence is Arginine--tRNA ligase, cytoplasmic (660 aa).

N-acetylmethionine is present on M1. A could be involved in the assembly of the multisynthetase complex region spans residues 1–72; sequence MDGLVAQCSA…QAERKRPTKN (72 aa). Residues 200-202, H211, Y384, D388, and Q412 contribute to the L-arginine site; that span reads SPN. The 'HIGH' region signature appears at 201–212; that stretch reads PNIAKEMHVGHL. An interaction with tRNA region spans residues 529-543; that stretch reads NTAAYLLYAFTRIRS.

It belongs to the class-I aminoacyl-tRNA synthetase family. As to quaternary structure, interacts (via N-terminus) with AIMP1 (via N-terminus); this stimulates its catalytic activity. Interacts (via N-terminus) with LARS2 (via C-terminus). Monomer. Part of a multisubunit complex that groups tRNA ligases for Arg (RARS1), Asp (DARS1), Gln (QARS1), Ile (IARS1), Leu (LARS1), Lys (KARS1), Met (MARS1) the bifunctional ligase for Glu and Pro (EPRS1) and the auxiliary subunits AIMP1/p43, AIMP2/p38 and EEF1E1/p18. Interacts with QARS1. Part of a complex composed of RARS1, QARS1 and AIMP1. Detected in dorsal root ganglion.

Its subcellular location is the cytoplasm. It is found in the cytosol. The catalysed reaction is tRNA(Arg) + L-arginine + ATP = L-arginyl-tRNA(Arg) + AMP + diphosphate. Its function is as follows. Forms part of a macromolecular complex that catalyzes the attachment of specific amino acids to cognate tRNAs during protein synthesis. Modulates the secretion of AIMP1 and may be involved in generation of the inflammatory cytokine EMAP2 from AIMP1. The chain is Arginine--tRNA ligase, cytoplasmic (Rars1) from Rattus norvegicus (Rat).